The primary structure comprises 364 residues: Aminomethyltransferase (364 aa).

This sequence belongs to the GcvT family. The glycine cleavage system is composed of four proteins: P, T, L and H.

It carries out the reaction N(6)-[(R)-S(8)-aminomethyldihydrolipoyl]-L-lysyl-[protein] + (6S)-5,6,7,8-tetrahydrofolate = N(6)-[(R)-dihydrolipoyl]-L-lysyl-[protein] + (6R)-5,10-methylene-5,6,7,8-tetrahydrofolate + NH4(+). In terms of biological role, the glycine cleavage system catalyzes the degradation of glycine. This Photorhabdus laumondii subsp. laumondii (strain DSM 15139 / CIP 105565 / TT01) (Photorhabdus luminescens subsp. laumondii) protein is Aminomethyltransferase.